The following is a 366-amino-acid chain: D-alanine--D-alanine ligase (366 aa).

The 207-residue stretch at Lys146–Glu352 folds into the ATP-grasp domain. Glu179–Glu234 contacts ATP. Mg(2+) contacts are provided by Asp305, Glu319, and Asn321.

This sequence belongs to the D-alanine--D-alanine ligase family. It depends on Mg(2+) as a cofactor. The cofactor is Mn(2+).

Its subcellular location is the cytoplasm. The catalysed reaction is 2 D-alanine + ATP = D-alanyl-D-alanine + ADP + phosphate + H(+). The protein operates within cell wall biogenesis; peptidoglycan biosynthesis. Its function is as follows. Cell wall formation. The chain is D-alanine--D-alanine ligase from Chloroherpeton thalassium (strain ATCC 35110 / GB-78).